The primary structure comprises 312 residues: Pollen allergen Phl p 5.0101 (312 aa).

Residues 1–25 form the signal peptide; that stretch reads MAVHQYTVALFLAVALVAGPAASYA.

Belongs to the Poa p IX/Phl p VI allergen family.

The protein resides in the secreted. This chain is Pollen allergen Phl p 5.0101, found in Phleum pratense (Common timothy).